A 343-amino-acid chain; its full sequence is Methionine import ATP-binding protein MetN (343 aa).

One can recognise an ABC transporter domain in the interval 2-241 (IKLSNITKVF…PKTPLAQKFI (240 aa)). 38-45 (GASGAGKS) contributes to the ATP binding site.

It belongs to the ABC transporter superfamily. Methionine importer (TC 3.A.1.24) family. The complex is composed of two ATP-binding proteins (MetN), two transmembrane proteins (MetI) and a solute-binding protein (MetQ).

It localises to the cell inner membrane. It catalyses the reaction L-methionine(out) + ATP + H2O = L-methionine(in) + ADP + phosphate + H(+). It carries out the reaction D-methionine(out) + ATP + H2O = D-methionine(in) + ADP + phosphate + H(+). Its function is as follows. Part of the ABC transporter complex MetNIQ involved in methionine import. Responsible for energy coupling to the transport system. This chain is Methionine import ATP-binding protein MetN, found in Escherichia coli O157:H7.